We begin with the raw amino-acid sequence, 353 residues long: Photosystem II protein D1 (353 aa).

Threonine 2 is modified (N-acetylthreonine). A Phosphothreonine modification is found at threonine 2. Helical transmembrane passes span 29 to 46 (YIGWFGVLMIPTLLTATS), 118 to 133 (HFLLGVACYMGREWEL), and 142 to 156 (WIAVAYSAPVAAATA). Residue histidine 118 coordinates chlorophyll a. Tyrosine 126 contacts pheophytin a. 2 residues coordinate [CaMn4O5] cluster: aspartate 170 and glutamate 189. A helical membrane pass occupies residues 197–218 (FHMLGVAGVFGGSLFSAMHGSL). Histidine 198 provides a ligand contact to chlorophyll a. Residues histidine 215 and 264–265 (SF) each bind a quinone. Histidine 215 provides a ligand contact to Fe cation. Fe cation is bound at residue histidine 272. The chain crosses the membrane as a helical span at residues 274–288 (FLAAWPVVGIWFTAL). [CaMn4O5] cluster contacts are provided by histidine 332, glutamate 333, aspartate 342, and alanine 344. A propeptide spanning residues 345 to 353 (AVEAPSING) is cleaved from the precursor.

Belongs to the reaction center PufL/M/PsbA/D family. In terms of assembly, PSII is composed of 1 copy each of membrane proteins PsbA, PsbB, PsbC, PsbD, PsbE, PsbF, PsbH, PsbI, PsbJ, PsbK, PsbL, PsbM, PsbT, PsbX, PsbY, PsbZ, Psb30/Ycf12, at least 3 peripheral proteins of the oxygen-evolving complex and a large number of cofactors. It forms dimeric complexes. The D1/D2 heterodimer binds P680, chlorophylls that are the primary electron donor of PSII, and subsequent electron acceptors. It shares a non-heme iron and each subunit binds pheophytin, quinone, additional chlorophylls, carotenoids and lipids. D1 provides most of the ligands for the Mn4-Ca-O5 cluster of the oxygen-evolving complex (OEC). There is also a Cl(-1) ion associated with D1 and D2, which is required for oxygen evolution. The PSII complex binds additional chlorophylls, carotenoids and specific lipids. serves as cofactor. Tyr-161 forms a radical intermediate that is referred to as redox-active TyrZ, YZ or Y-Z. In terms of processing, C-terminally processed by CTPA; processing is essential to allow assembly of the oxygen-evolving complex and thus photosynthetic growth.

It localises to the plastid. The protein resides in the chloroplast thylakoid membrane. The catalysed reaction is 2 a plastoquinone + 4 hnu + 2 H2O = 2 a plastoquinol + O2. Photosystem II (PSII) is a light-driven water:plastoquinone oxidoreductase that uses light energy to abstract electrons from H(2)O, generating O(2) and a proton gradient subsequently used for ATP formation. It consists of a core antenna complex that captures photons, and an electron transfer chain that converts photonic excitation into a charge separation. The D1/D2 (PsbA/PsbD) reaction center heterodimer binds P680, the primary electron donor of PSII as well as several subsequent electron acceptors. In Medicago sativa (Alfalfa), this protein is Photosystem II protein D1.